Consider the following 251-residue polypeptide: Coproheme decarboxylase (251 aa).

Fe-coproporphyrin III is bound by residues Arg133, 147 to 151 (YPMSK), His174, Gln187, and Ser225. Residue Tyr147 is part of the active site.

It belongs to the ChdC family. Type 1 subfamily. Fe-coproporphyrin III serves as cofactor.

The enzyme catalyses Fe-coproporphyrin III + 2 H2O2 + 2 H(+) = heme b + 2 CO2 + 4 H2O. It carries out the reaction Fe-coproporphyrin III + H2O2 + H(+) = harderoheme III + CO2 + 2 H2O. It catalyses the reaction harderoheme III + H2O2 + H(+) = heme b + CO2 + 2 H2O. The protein operates within porphyrin-containing compound metabolism; protoheme biosynthesis. Its function is as follows. Involved in coproporphyrin-dependent heme b biosynthesis. Catalyzes the decarboxylation of Fe-coproporphyrin III (coproheme) to heme b (protoheme IX), the last step of the pathway. The reaction occurs in a stepwise manner with a three-propionate intermediate. The polypeptide is Coproheme decarboxylase (Listeria monocytogenes serotype 4a (strain HCC23)).